The primary structure comprises 60 residues: Large ribosomal subunit protein bL32 (60 aa).

This sequence belongs to the bacterial ribosomal protein bL32 family.

The sequence is that of Large ribosomal subunit protein bL32 from Streptococcus gordonii (strain Challis / ATCC 35105 / BCRC 15272 / CH1 / DL1 / V288).